A 136-amino-acid chain; its full sequence is Protein NrdI (136 aa).

Belongs to the NrdI family.

Probably involved in ribonucleotide reductase function. The polypeptide is Protein NrdI (Salmonella dublin (strain CT_02021853)).